Consider the following 1444-residue polypeptide: MDLARSDIIPHLLCLFQEIIQANIQKVSEAYDLELKIMNILTLWRNGSDNLISDNDDYMKKGLFFSRSNDPLALQARYAQMYDDLFKLNNYKVPDDVVRKHDTKILDIILKESSVPFWYDISDDEAHESMLPEFRLQDIHEFRLNLKRVAVVPDESEEIQMDESQSDKRRRKKRMEKSRPVWLSGSENDRRIELNDSLKPSQKFETKLSSYLLNRLMNEMNPHYCGHPLPALFVTLIMLKAYSLKNKFFSYGIRYMELVCNEIGGPDLNTRTFPVLFGSDGSFVGTRVYSHYPIKLRMILNDLTYLLTYSDLHKFQEFELDVNDEVLLHMLHSPNDGRQLKKAVTRLNLYYGLKFNPKTTDCGVVNGMDFTHKHPITKTADFTSPVLPMTNSFNKAEICYGHSSKILNRAVFTDTVRGYIREDLKNVADLDLPKLHEHVSKLVDMRVNYTIIYDLMFLRVMLNLGGYSRSNQITDFRKTIDEITKMNEDFLSGADPEKNIDILNAWMAPTMEDCGYRLTKSILFGKFRKAKYPSDLEAKSNIDYYVTARSAGIGNLRISIETDKRKYKVRTTSKSAFVNAMGSGILDVNPVSNEPMMLTDYLLTQTPETRANLEAAIDSGSISDSELMRILGQNSIGSRSTTAWRPVRPIYINVLQAHLAQAFIIGPHINATVNQHESQPTSLWFTGDDLGVGFATLYQNGTADIIAPAIEASSTGKALSVLADCSSWDQTFLTATIIPYYNGIKKALLEYQQADMRNFYMIDSSRTGVPGMKLSEIVDWFNSFQTKRIFNASYLKERHSFVVKYMWSGRLDTFFMNSVQNALITRRIAEEVSLKVSNTGLSWFQVAGDDAIMVYDGSSISTTEQVTRVNEITVRNYEESNHIINPQKTVISHISGEYAKIYYYAGMHFRDPSIQLHESEKDSGASDVTESLRGFGQVIYEYNKRAIGTLRVNALYGRLIAGLAYSVNVRRYDASKRTYANMKYYPPPTSVIAPAAFKGGLGLSFTGLSLNEVLFIKMHLHEAVSQGLHVISMISFEANEVVSNSLSAYYLKDQKDLLRDMKLGKHLEKVKGISFKSSDLAFSGSDFSQGLNLKRESIDKVKLEVSRKSIRDLRSSGISVPSTHAYENLPYASLHQSFKSLKVDRDTSKFTNERLLVSLLEYKSDIPRVSVTSQYPVYDLINISKVDELNVRSGGPVRFISTPIEGKLLEENIGTRQGVQFKNRGYGGSQEVLHFIRSNGLVITEQALIDLIIKSGVLLMINPQRGLIDLFQSLSGDTASSMHLANFFMAEKPHWEDNAISLTIAGSLLENCDSRIENVKNFVSVLATGMQKDLQRMFYYVGFVYYAQRLIWSGGHSSKIFVSIDEDKLADFLRGSKPITRRRKAMAGTKREPINLSANFSYEISEPDREISEYDPLVLCHPLSMPFFGNWQEKYSVMQSDEQM.

Residues 157 to 181 (EEIQMDESQSDKRRRKKRMEKSRPV) form a disordered region. In terms of domain architecture, RdRp catalytic spans 690–897 (LGVGFATLYQ…KTVISHISGE (208 aa)).

It belongs to the reoviridae RNA-directed RNA polymerase family.

The protein resides in the virion. Its subcellular location is the host cytoplasm. It catalyses the reaction RNA(n) + a ribonucleoside 5'-triphosphate = RNA(n+1) + diphosphate. Its function is as follows. RNA-directed RNA polymerase that is involved in both transcription and genome replication. Together with the capping enzyme P5 and protein P7, forms an enzyme complex positioned near the channels situated at each of the five-fold vertices of the core. The polypeptide is RNA-directed RNA polymerase P1 (Rice dwarf virus (isolate Akita) (RDV)).